The following is a 500-amino-acid chain: MMSNLIILPMLLPFVCALILVFTKNKNRISKILSITTMIVNTMISIALLIYVVNHKPITLDFGGWKAPFGIQFLGDSLSLLMVSVSSFVVTLIMAYGFGRGEKRVNRFHLPTFILLLTVGVIGSFLTSDLFNLYVMFEIMLLASFVLVTLGQSVEQLRAAIVYVVLNILGSWLLLLGIGMLYKTVGTLNFSHLAMRLNHMENNQTITMISLVFLVAFSSKAALVIFMWLPKAYAVLNTELAALFAALMTKVGAYALIRFFTLLFDHHPSVTHTLLVFMACITMIIGAFGVIAYKDIKKIAAYQVILSIGFIILGLGSHTISGVNGAIFYLANDIIVKTLLFFVIGSLVYMSGYRNYQYLSGLAKREPFFGVAFVVVIFAIGGVPPFSGFPGKVLIFQGAITNGNYIGLALMIVTSLIAMYSLFRVMFIMYFGDADGEQVQFRPLPIYRKGLLSVLVVVVLAMGIAAPVVLKVTEDATNLNMKEDVFQKNVNTHLKEVNHK.

The next 14 helical transmembrane spans lie at 2–22 (MSNL…ILVF), 32–52 (ILSI…LIYV), 78–98 (LSLL…AYGF), 108–128 (FHLP…FLTS), 130–150 (LFNL…LVTL), 161–181 (IVYV…IGML), 209–229 (ISLV…FMWL), 240–260 (LAAL…IRFF), 273–293 (TLLV…VIAY), 308–328 (IGFI…GAIF), 330–350 (LAND…LVYM), 368–388 (FFGV…PFSG), 403–423 (GNYI…YSLF), and 450–470 (GLLS…PVVL).

This sequence belongs to the CPA3 antiporters (TC 2.A.63) subunit D family. May form a heterooligomeric complex that consists of seven subunits: mnhA2, mnhB2, mnhC2, mnhD2, mnhE2, mnhF2 and mnhG2.

The protein resides in the cell membrane. The polypeptide is Putative antiporter subunit mnhD2 (mnhD2) (Staphylococcus epidermidis (strain ATCC 12228 / FDA PCI 1200)).